The sequence spans 114 residues: Large ribosomal subunit protein bL20 (114 aa).

Belongs to the bacterial ribosomal protein bL20 family.

Functionally, binds directly to 23S ribosomal RNA and is necessary for the in vitro assembly process of the 50S ribosomal subunit. It is not involved in the protein synthesizing functions of that subunit. The polypeptide is Large ribosomal subunit protein bL20 (Flavobacterium johnsoniae (strain ATCC 17061 / DSM 2064 / JCM 8514 / BCRC 14874 / CCUG 350202 / NBRC 14942 / NCIMB 11054 / UW101) (Cytophaga johnsonae)).